The sequence spans 360 residues: Vomilenine reductase (360 aa).

The 329-residue stretch at 23 to 351 (GLLSPFNFSR…KADVKYRFVI (329 aa)) folds into the Enoyl reductase (ER) domain. Position 50 (Cys-50) interacts with Zn(2+). Ser-52 is a binding site for an alcohol. Ser-52 lines the NADP(+) pocket. Asp-53, His-72, Glu-73, Cys-103, Cys-106, Cys-109, Cys-117, and Cys-166 together coordinate Zn(2+). His-72 provides a ligand contact to an alcohol. Positions 192, 194, 195, 214, 215, 216, 219, 220, 277, 279, 301, and 348 each coordinate NADP(+).

The protein belongs to the zinc-containing alcohol dehydrogenase family. Class-P subfamily. In terms of assembly, homodimer. Requires Zn(2+) as cofactor. In terms of tissue distribution, confined to roots.

The protein localises to the cytoplasm. The enzyme catalyses (2R)-1,2-dihydrovomilenine + NADP(+) = vomilenine + NADPH + H(+). It participates in alkaloid biosynthesis; ajmaline biosynthesis. Its activity is regulated as follows. Inhibited by EDTA and p-hydroxymercuribenzoate, a sulfhydryl reagent. In terms of biological role, alcohol dehydrogenase involved in the biosynthesis of ajmaline-type monoterpenoid indole alkaloids (MIAs) natural products, important plant-derived pharmaceuticals used in the therapy of heart disorders. Catalyzes the conversion of vomilenine to 1,2-dihydrovomilenine, an intermediate chemical in the biosynthesis of ajmaline. The sequence is that of Vomilenine reductase from Rauvolfia serpentina (Serpentine wood).